The primary structure comprises 127 residues: Cuticle protein 4 (127 aa).

The residue at position 1 (Gln1) is a Pyrrolidone carboxylic acid. Tandem repeats lie at residues 31–39 and 84–92.

The polypeptide is Cuticle protein 4 (Blaberus craniifer (Death's head cockroach)).